The chain runs to 176 residues: Small ribosomal subunit protein uS5 (176 aa).

Positions 18 to 81 (FEEKMLFVNR…SIARKNMISV (64 aa)) constitute an S5 DRBM domain.

The protein belongs to the universal ribosomal protein uS5 family. As to quaternary structure, part of the 30S ribosomal subunit. Contacts proteins S4 and S8.

Its function is as follows. With S4 and S12 plays an important role in translational accuracy. Functionally, located at the back of the 30S subunit body where it stabilizes the conformation of the head with respect to the body. This is Small ribosomal subunit protein uS5 from Deinococcus deserti (strain DSM 17065 / CIP 109153 / LMG 22923 / VCD115).